We begin with the raw amino-acid sequence, 34 residues long: Potassium channel toxin (34 aa).

Disulfide bonds link Cys-6/Cys-25, Cys-11/Cys-29, and Cys-15/Cys-31.

Belongs to the short scorpion toxin superfamily. Potassium channel inhibitor family. Alpha-KTx 21 subfamily. In terms of tissue distribution, expressed by the venom gland.

The protein resides in the secreted. Toxin that blocks voltage-gated potassium channels (Kv). This is Potassium channel toxin from Tityus metuendus (Scorpion).